A 549-amino-acid chain; its full sequence is Glucose-6-phosphate isomerase (549 aa).

The Proton donor role is filled by glutamate 355. Active-site residues include histidine 386 and lysine 514.

The protein belongs to the GPI family.

It is found in the cytoplasm. It carries out the reaction alpha-D-glucose 6-phosphate = beta-D-fructose 6-phosphate. It functions in the pathway carbohydrate biosynthesis; gluconeogenesis. Its pathway is carbohydrate degradation; glycolysis; D-glyceraldehyde 3-phosphate and glycerone phosphate from D-glucose: step 2/4. In terms of biological role, catalyzes the reversible isomerization of glucose-6-phosphate to fructose-6-phosphate. The protein is Glucose-6-phosphate isomerase of Edwardsiella ictaluri (strain 93-146).